The sequence spans 87 residues: Small ribosomal subunit protein bS20 (87 aa).

The tract at residues 1–26 is disordered; that stretch reads MANTKSALKRIRQTATRTARNRAVTS. Residues 13–23 are compositionally biased toward low complexity; that stretch reads QTATRTARNRA.

Belongs to the bacterial ribosomal protein bS20 family.

In terms of biological role, binds directly to 16S ribosomal RNA. This chain is Small ribosomal subunit protein bS20, found in Akkermansia muciniphila (strain ATCC BAA-835 / DSM 22959 / JCM 33894 / BCRC 81048 / CCUG 64013 / CIP 107961 / Muc).